A 562-amino-acid chain; its full sequence is Catalase T (562 aa).

Catalysis depends on residues histidine 64 and asparagine 137. Tyrosine 351 is a heme binding site.

Belongs to the catalase family. As to quaternary structure, homotetramer. Heme is required as a cofactor.

It is found in the cytoplasm. The catalysed reaction is 2 H2O2 = O2 + 2 H2O. In terms of biological role, occurs in almost all aerobically respiring organisms and serves to protect cells from the toxic effects of hydrogen peroxide. In Saccharomyces cerevisiae (strain ATCC 204508 / S288c) (Baker's yeast), this protein is Catalase T (CTT1).